The chain runs to 609 residues: PTS system beta-glucoside-specific EIIBCA component (609 aa).

A PTS EIIB type-1 domain is found at 1-86 (MDYDKLSKDI…VRHSNLSDEK (86 aa)). The active-site Phosphocysteine intermediate; for EIIB activity is Cys26. Residues 103-459 (DVISGVFTPI…GSQQPAVHEG (357 aa)) form the PTS EIIC type-1 domain. The next 10 membrane-spanning stretches (helical) occupy residues 112 to 132 (ILPA…AVTF), 141 to 161 (VHVI…LLLA), 174 to 194 (VAAA…LGAG), 202 to 222 (LPVT…SIWI), 246 to 266 (FTLL…GAIL), 281 to 301 (AGLV…MTGM), 321 to 341 (LLPA…AVFL), 351 to 371 (LALT…MYGV), 379 to 399 (FAAA…TGVA), and 412 to 432 (IPVF…IAFA). The region spanning 480–584 (DGVFSAGVMG…DVITPVIVTN (105 aa)) is the PTS EIIA type-1 domain. The active-site Tele-phosphohistidine intermediate; for EIIA activity is the His532.

Its subcellular location is the cell membrane. Its function is as follows. The phosphoenolpyruvate-dependent sugar phosphotransferase system (sugar PTS), a major carbohydrate active -transport system, catalyzes the phosphorylation of incoming sugar substrates concomitantly with their translocation across the cell membrane. This system is involved in beta-glucoside transport. The polypeptide is PTS system beta-glucoside-specific EIIBCA component (bglP) (Bacillus subtilis (strain 168)).